The following is a 448-amino-acid chain: N-succinylarginine dihydrolase (448 aa).

Substrate-binding positions include 19–28, Asn-110, and 137–138; these read GGLSYGNVAS and HR. The active site involves Glu-174. Substrate is bound at residue Arg-214. The active site involves His-250. 2 residues coordinate substrate: Asp-252 and Asn-365. Cys-371 (nucleophile) is an active-site residue.

Belongs to the succinylarginine dihydrolase family. Homodimer.

It catalyses the reaction N(2)-succinyl-L-arginine + 2 H2O + 2 H(+) = N(2)-succinyl-L-ornithine + 2 NH4(+) + CO2. Its pathway is amino-acid degradation; L-arginine degradation via AST pathway; L-glutamate and succinate from L-arginine: step 2/5. Its function is as follows. Catalyzes the hydrolysis of N(2)-succinylarginine into N(2)-succinylornithine, ammonia and CO(2). This Pseudomonas fluorescens (strain SBW25) protein is N-succinylarginine dihydrolase.